Consider the following 326-residue polypeptide: Light-induced protein, chloroplastic (326 aa).

The transit peptide at 1–63 (MASISSLNQI…TNPKPKFTAQ (63 aa)) directs the protein to the chloroplast.

This sequence belongs to the LIPC family. As to quaternary structure, associates with the major light-harvesting antenna complex polypeptides of the PSII oxygen-evolving complex. Expressed in leaves.

The protein resides in the plastid. The protein localises to the chloroplast thylakoid membrane. Its function is as follows. Required for normal plant growth. May be both photoprotective and play an ancillary role in photosynthesis. May structurally stabilize thylakoids during osmotic and oxidative stress. This Solanum tuberosum (Potato) protein is Light-induced protein, chloroplastic.